The sequence spans 194 residues: Molybdenum cofactor guanylyltransferase (194 aa).

Residues 12-14 (LAG), Lys-25, Asn-53, Asp-70, and Asp-100 each bind GTP. Asp-100 contacts Mg(2+).

The protein belongs to the MobA family. Monomer. Mg(2+) is required as a cofactor.

The protein resides in the cytoplasm. It catalyses the reaction Mo-molybdopterin + GTP + H(+) = Mo-molybdopterin guanine dinucleotide + diphosphate. Its function is as follows. Transfers a GMP moiety from GTP to Mo-molybdopterin (Mo-MPT) cofactor (Moco or molybdenum cofactor) to form Mo-molybdopterin guanine dinucleotide (Mo-MGD) cofactor. This chain is Molybdenum cofactor guanylyltransferase, found in Photobacterium profundum (strain SS9).